Reading from the N-terminus, the 438-residue chain is UPF0229 protein R01398 (438 aa).

The segment at 55-107 (PARGVNEPAFQPDSNSGERRHVLPGNREFAAGDRIPKRGSGGGAGNAGAGTGQ) is disordered. Residues 93-105 (GSGGGAGNAGAGT) show a composition bias toward gly residues.

This sequence belongs to the UPF0229 family.

The polypeptide is UPF0229 protein R01398 (Rhizobium meliloti (strain 1021) (Ensifer meliloti)).